The following is a 339-amino-acid chain: Fructose-1,6-bisphosphatase isozyme 2 (339 aa).

Residues aspartate 3 to aspartate 10 form an important for interaction with ALDOA region. Residues valine 18 and threonine 28–threonine 32 each bind AMP. Mg(2+) is bound by residues aspartate 69 and glutamate 98. Lysine 113 to tyrosine 114 contributes to the AMP binding site. Mg(2+) contacts are provided by aspartate 119, leucine 121, and aspartate 122. Residue aspartate 122 participates in substrate binding. Arginine 141 is an AMP binding site. The Nuclear localization signal motif lies at lysine 204–lysine 208. Residue asparagine 213–tyrosine 216 participates in substrate binding. Phosphotyrosine occurs at positions 216 and 219. Residues tyrosine 245–methionine 249, tyrosine 265, and lysine 275 contribute to the substrate site. Glutamate 281 provides a ligand contact to Mg(2+).

Belongs to the FBPase class 1 family. In terms of assembly, homotetramer. Interacts with ALDOA; the interaction blocks inhibition by physiological concentrations of AMP and reduces inhibition by Ca(2+). Interacts with alpha-actinin and F-actin. Requires Mg(2+) as cofactor.

It is found in the cell junction. Its subcellular location is the cytoplasm. It localises to the nucleus. The protein resides in the myofibril. The protein localises to the sarcomere. It is found in the z line. The catalysed reaction is beta-D-fructose 1,6-bisphosphate + H2O = beta-D-fructose 6-phosphate + phosphate. It functions in the pathway carbohydrate biosynthesis; gluconeogenesis. Its activity is regulated as follows. Subject to complex allosteric regulation. The enzyme can assume an active R-state, or an inactive T-state. Intermediate conformations may exist. AMP acts as an allosteric inhibitor. Fructose 2,6-bisphosphate acts as a competitive inhibitor. Strongly inhibited by Ca(2+). Catalyzes the hydrolysis of fructose 1,6-bisphosphate to fructose 6-phosphate in the presence of divalent cations and probably participates in glycogen synthesis from carbohydrate precursors, such as lactate. The sequence is that of Fructose-1,6-bisphosphatase isozyme 2 (FBP2) from Bos taurus (Bovine).